The chain runs to 570 residues: Peptidyl-prolyl cis-trans isomerase-like 2 (570 aa).

The U-box domain maps to 37–110 (KRLPFNFCSL…GDYVDPVTYK (74 aa)). Disordered stretches follow at residues 215-253 (RSER…KPTP), 428-449 (STTL…PTPD), and 469-570 (KKAE…SSWD). The segment covering 234–248 (STTTSTQSKTASFQS) has biased composition (low complexity). In terms of domain architecture, PPIase cyclophilin-type spans 298–457 (QKGYARISTT…PDIRITDVTI (160 aa)). Polar residues predominate over residues 428–446 (STTLNNLETHPVNSSTNRP). The segment covering 469–483 (KKAEEASGKNKKVDP) has biased composition (basic and acidic residues). 2 stretches are compositionally biased toward acidic residues: residues 484 to 497 (TEED…DDDQ) and 535 to 550 (QEED…EPEP).

Belongs to the cyclophilin-type PPIase family. PPIL2 subfamily.

Its subcellular location is the nucleus. It catalyses the reaction [protein]-peptidylproline (omega=180) = [protein]-peptidylproline (omega=0). The catalysed reaction is S-ubiquitinyl-[E2 ubiquitin-conjugating enzyme]-L-cysteine + [acceptor protein]-L-lysine = [E2 ubiquitin-conjugating enzyme]-L-cysteine + N(6)-ubiquitinyl-[acceptor protein]-L-lysine.. May catalyze the cis-trans isomerization of proline imidic peptide bonds in oligopeptides thereby assisting the folding of proteins. May also function as a chaperone, playing a role in intracellular transport of proteins. May also have a protein ubiquitin ligase activity acting as an E3 ubiquitin protein ligase or as a ubiquitin-ubiquitin ligase promoting elongation of ubiquitin chains on proteins. This is Peptidyl-prolyl cis-trans isomerase-like 2 (cyp8) from Aspergillus oryzae (strain ATCC 42149 / RIB 40) (Yellow koji mold).